We begin with the raw amino-acid sequence, 465 residues long: Intraflagellar transport protein 54 (465 aa).

2 disordered regions span residues 119–301 and 347–366; these read VRSN…GFTM and LHGDGSKKPTGLSTQRDKKP. A coiled-coil region spans residues 144-207; sequence LEALAREKAE…KQKQQQQQQQ (64 aa). Positions 146–198 are enriched in basic and acidic residues; sequence ALAREKAEKERQRREQEQQERERKERERQEKEREEREKHELESRERAEAEQWK. The segment covering 199-220 has biased composition (low complexity); that stretch reads QKQQQQQQQQQSAISPQKSPPK. Residues 222–242 are compositionally biased toward basic and acidic residues; it reads RFADDDKTRVEEHQPVIERPH.

Belongs to the TRAF3IP1 family.

The protein localises to the cell projection. It is found in the cilium. The protein resides in the flagellum. It localises to the cytoplasm. Its subcellular location is the cytoskeleton. The protein localises to the flagellum axoneme. It is found in the flagellum basal body. Component of the intraflagellar transport complex B (IFT-B) involved in flagellar assembly. This Giardia intestinalis (strain ATCC 50803 / WB clone C6) (Giardia lamblia) protein is Intraflagellar transport protein 54.